The primary structure comprises 553 residues: MNIIDQVKQTLIEEIEASIRKANLAEDIPEIKIEIPKDTKNGDYSSNIAMVLTKIAKRNPREIAQAIVDHLDTSKAHVKQVDIAGPGFINFYLDNQYLTDIIPEAITKGDRFGYATQSKNTNILLEYVSANPTGDLHIGHARNAAVGDSLANILIAAGYNVTREYYINDAGNQITNLARSIEARYFEALGDTSYEMPADGYNGKDIIEIGKDLAVKHPEIKDYSDEERLKTFRQLGVDYEMEKLKKDLSDFNVHFDNWFSETSLYENGAIKNTLSKMKELGYTYEADGATWLRTSDFKDDKDRVLIKKDGNYTYFTPDTAYHYNKINRGNDILIDLMGADHHGYINRLKASLETFGVDSDRLEIQIMQMVRLMQNGEEVKMSKRTGNAITLREIMDEVGIDAARYFLTMRSPDSHFDFDLELAKEQSQDNPIYYAQYAHARICSILKQAKEQGIEVSTDADFSKINNDKAIDLLKKVAEFESTIESAAEHRAPHRLTNYIQDLAAAFHKFYNAEKVLTDDTEKTKAHVAMIEAVRITLHNALALVGVTAPESM.

Positions 130–140 match the 'HIGH' region motif; it reads ANPTGDLHIGH.

Belongs to the class-I aminoacyl-tRNA synthetase family. As to quaternary structure, monomer.

The protein localises to the cytoplasm. It catalyses the reaction tRNA(Arg) + L-arginine + ATP = L-arginyl-tRNA(Arg) + AMP + diphosphate. This chain is Arginine--tRNA ligase, found in Staphylococcus epidermidis (strain ATCC 12228 / FDA PCI 1200).